Here is a 208-residue protein sequence, read N- to C-terminus: Ribosomal RNA large subunit methyltransferase E (208 aa).

Residues G63, W65, D83, D99, and D124 each coordinate S-adenosyl-L-methionine. The active-site Proton acceptor is the K164.

This sequence belongs to the class I-like SAM-binding methyltransferase superfamily. RNA methyltransferase RlmE family.

The protein localises to the cytoplasm. It carries out the reaction uridine(2552) in 23S rRNA + S-adenosyl-L-methionine = 2'-O-methyluridine(2552) in 23S rRNA + S-adenosyl-L-homocysteine + H(+). Specifically methylates the uridine in position 2552 of 23S rRNA at the 2'-O position of the ribose in the fully assembled 50S ribosomal subunit. The polypeptide is Ribosomal RNA large subunit methyltransferase E (Blochmanniella pennsylvanica (strain BPEN)).